We begin with the raw amino-acid sequence, 953 residues long: Zinc finger protein 618 (953 aa).

Methionine 1 is modified (N-acetylmethionine). The segment at 1 to 56 is disordered; that stretch reads MSQPDGAAAPQVDGASAPGRKSAVNRERLKRSQKSSKVEGPEPVPAEASLSAEQGT. Glycyl lysine isopeptide (Lys-Gly) (interchain with G-Cter in SUMO2) cross-links involve residues lysine 63 and lysine 81. 2 consecutive C2H2-type zinc fingers follow at residues 146–168 and 187–209; these read YECG…VRAH and YTCD…RDLH. A Glycyl lysine isopeptide (Lys-Gly) (interchain with G-Cter in SUMO2) cross-link involves residue lysine 238. The C2H2-type 3 zinc-finger motif lies at 255-277; sequence YTCEFCGKQYKYYTPYQEHVALH. Disordered regions lie at residues 283–305 and 337–390; these read APGW…EVTP and TPPA…SSEP. Residues 339-354 show a composition bias toward polar residues; sequence PATQTQTFRAPNSGSP. A compositionally biased stretch (basic and acidic residues) spans 365–379; the sequence is FSRRVESKAQNHFEE. The C2H2-type 4 zinc finger occupies 391–413; sequence YTCGACGIQFQFYSNLLEHMQSH. The span at 419–428 shows a compositional bias: polar residues; the sequence is NNITSNQSRS. The tract at residues 419–461 is disordered; the sequence is NNITSNQSRSPPAAVEEKWKPQAQRNSANNTTTSGLTPNSVIP. A Glycyl lysine isopeptide (Lys-Gly) (interchain with G-Cter in SUMO2) cross-link involves residue lysine 436. Residues 441–458 show a composition bias toward polar residues; sequence AQRNSANNTTTSGLTPNS.

This sequence belongs to the krueppel C2H2-type zinc-finger protein family. Interacts with UHRF2.

Its subcellular location is the nucleus. The protein resides in the chromosome. Functionally, regulates UHRF2 function as a specific 5-hydroxymethylcytosine (5hmC) reader by regulating its chromatin localization. In Mus musculus (Mouse), this protein is Zinc finger protein 618 (Znf618).